We begin with the raw amino-acid sequence, 1029 residues long: Endosome/lysosome-associated apoptosis and autophagy regulator family member 2 (1029 aa).

An N-terminal signal peptide occupies residues 1–47 (MLFRARGPVRGRGWGRPAEAPRRGRSPPWSPAWICCWALAGCQAAWA). At 48–929 (GDLPSSSSRP…TCETVDFWLK (882 aa)) the chain is on the extracellular side. The N-linked (GlcNAc...) asparagine glycan is linked to N169. 3 disulfides stabilise this stretch: C293–C310, C323–C346, and C326–C358. N405 and N691 each carry an N-linked (GlcNAc...) asparagine glycan. The MRH domain occupies 672 to 877 (SDCFFYHEKE…LWESAEACPL (206 aa)). 4 disulfides stabilise this stretch: C674-C720, C730-C758, C827-C863, and C839-C875. A helical transmembrane segment spans residues 930–950 (VGAGVGAFTAVLLVALTCYFW). The Cytoplasmic portion of the chain corresponds to 951-1029 (KKNQKLEYKY…QLKTSRSPNI (79 aa)). The residue at position 1018 (S1018) is a Phosphoserine.

It belongs to the ELAPOR family.

It is found in the cell membrane. Functions as a regulator of the BMP signaling pathway and may be involved in epidermal differentiation. The polypeptide is Endosome/lysosome-associated apoptosis and autophagy regulator family member 2 (Homo sapiens (Human)).